The chain runs to 736 residues: ABC transporter G family member 16 (736 aa).

The region spanning 88-332 (LDFHDLVPWR…FAGFGNPIPE (245 aa)) is the ABC transporter domain. 125–132 (GASGSGKS) serves as a coordination point for ATP. 7 helical membrane passes run 410 to 430 (SVIN…PFWI), 449 to 469 (LLGM…TVFW), 484 to 504 (FFAF…PVFL), 525 to 545 (VLSH…AFAV), 569 to 589 (ASFW…PHVM), 590 to 610 (LGYT…GFFI), and 709 to 729 (LLIT…CLLL). The ABC transmembrane type-2 domain maps to 430 to 640 (IEIKTLTRRS…PYEAVLQNEF (211 aa)).

This sequence belongs to the ABC transporter superfamily. ABCG family. Eye pigment precursor importer (TC 3.A.1.204) subfamily.

Its subcellular location is the membrane. This is ABC transporter G family member 16 (ABCG16) from Arabidopsis thaliana (Mouse-ear cress).